A 271-amino-acid polypeptide reads, in one-letter code: Cyclic AMP-dependent transcription factor ATF-1 (271 aa).

The disordered stretch occupies residues Met1–Arg61. The KID domain maps to Gln31–Ala90. Position 63 is a phosphoserine; by CaMK1, CDK3, RPS6KA4 and RPS6KA5 (Ser63). Ser198 is subject to Phosphoserine; by HIPK2. Glycyl lysine isopeptide (Lys-Gly) (interchain with G-Cter in SUMO2) cross-links involve residues Lys208 and Lys215. Residues Gln213–Val271 form the bZIP domain. Residues Lys215 to Lys239 are basic motif. A leucine-zipper region spans residues Leu241–Leu262.

It belongs to the bZIP family. ATF subfamily. As to quaternary structure, binds DNA as a dimer. Interacts with HIPK2 and CDK3. Interacts with MOTS-c, a peptide produced by the mitochondrially encoded 12S rRNA MT-RNR1; the interaction occurs in the nucleus following metabolic stress. In terms of processing, phosphorylated at Ser-198 by HIPK2 in response to genotoxic stress. This phosphorylation promotes transcription repression of FTH1 and other antioxidant detoxification genes. The CDK3-mediated phosphorylation at Ser-63 promotes its transactivation and transcriptional activities. Phosphorylated at Ser-63 by RPS6KA4 and RPS6KA5 in response to mitogenic or stress stimuli.

It localises to the nucleus. Functionally, this protein binds the cAMP response element (CRE) (consensus: 5'-GTGACGT[AC][AG]-3'), a sequence present in many viral and cellular promoters. Binds to the Tax-responsive element (TRE) of HTLV-I. Mediates PKA-induced stimulation of CRE-reporter genes. Represses the expression of FTH1 and other antioxidant detoxification genes. Triggers cell proliferation and transformation. The chain is Cyclic AMP-dependent transcription factor ATF-1 (ATF1) from Homo sapiens (Human).